A 404-amino-acid polypeptide reads, in one-letter code: Protein translocase subunit SecF (404 aa).

A run of 6 helical transmembrane segments spans residues 15-35 (KWYFLAFSLVFSVAGLISMGA), 225-245 (LLATLYSLGGMLVYLWFRFEL), 246-266 (IYGIGAVVACFHDTIITVGAF), 275-295 (LTVVAAILTLIGYSMNDTIVV), 327-347 (ILTSGLTFLTVLSLYVFGGEV), and 355-375 (LVIGILIGTYSSIAVAAPMLV).

Belongs to the SecD/SecF family. SecF subfamily. As to quaternary structure, forms a complex with SecD. Part of the essential Sec protein translocation apparatus which comprises SecA, SecYEG and auxiliary proteins SecDF. Other proteins may also be involved.

The protein localises to the cell inner membrane. Its function is as follows. Part of the Sec protein translocase complex. Interacts with the SecYEG preprotein conducting channel. SecDF uses the proton motive force (PMF) to complete protein translocation after the ATP-dependent function of SecA. This chain is Protein translocase subunit SecF, found in Koribacter versatilis (strain Ellin345).